The primary structure comprises 360 residues: Peptide chain release factor 1 (360 aa).

At Gln236 the chain carries N5-methylglutamine.

This sequence belongs to the prokaryotic/mitochondrial release factor family. Post-translationally, methylated by PrmC. Methylation increases the termination efficiency of RF1.

It is found in the cytoplasm. Peptide chain release factor 1 directs the termination of translation in response to the peptide chain termination codons UAG and UAA. The sequence is that of Peptide chain release factor 1 from Methylococcus capsulatus (strain ATCC 33009 / NCIMB 11132 / Bath).